We begin with the raw amino-acid sequence, 725 residues long: Kinesin-like protein KIF2C (725 aa).

Alanine 2 bears the N-acetylalanine mark. The segment at 2 to 254 is globular; that stretch reads AMDSSLQARL…CHPLTMTDPI (253 aa). Residues serine 6 and serine 22 each carry the phosphoserine modification. Positions 89–116 are disordered; that stretch reads QKQKRRSVNSKIPAPKESLRSRSTRMST. Serine 95 carries the post-translational modification Phosphoserine; by AURKB. The Microtubule tip localization signal motif lies at 98–101; sequence SKIP. A phosphoserine mark is found at serine 106, serine 109, serine 111, serine 115, serine 166, serine 175, serine 187, and serine 192. The tract at residues 207–238 is negative regulator of microtubule-binding; sequence EKKAQNSEMRMKRAQEYDSSFPNWEFARMIKE. The Kinesin motor domain maps to 258–588; that stretch reads RICVCVRKRP…LRYADRVKEL (331 aa). Residues arginine 264 and 348 to 355 contribute to the ATP site; that span reads GQTGSGKT. A Nuclear localization signal motif is present at residues 415–418; it reads KKAK. Phosphoserine occurs at positions 519, 621, and 633. A coiled-coil region spans residues 618–658; that stretch reads GNLSKEEEELSSQMSSFNEAMTQIRELEEKAMEELKEIIQQ.

The protein belongs to the TRAFAC class myosin-kinesin ATPase superfamily. Kinesin family. MCAK/KIF2 subfamily. As to quaternary structure, interacts with CENPH. Interacts with MTUS2/TIP150; the interaction is direct. Interacts with MAPRE1; the interaction is direct, regulated by phosphorylation and is probably required for targeting to growing microtubule plus ends. Interacts with KIF18B at microtubule tips; this interaction increases the affinity of both partners for microtubule plus ends and is required for robust microtubule depolymerization. Phosphorylation by AURKA or AURKB strongly reduces KIF18B-binding. Post-translationally, phosphorylation by AURKB, regulates association with centromeres and kinetochores and the microtubule depolymerization activity. Ubiquitinated. Expressed at high levels in thymus and testis, at low levels in small intestine, the mucosal lining of colon, and placenta, and at very low levels in spleen and ovary; expression is not detected in prostate, peripheral blood Leukocytes, heart, brain, lung, liver, skeletal muscle, kidney or pancreas. Isoform 2 is testis-specific.

It localises to the cytoplasm. Its subcellular location is the cytoskeleton. It is found in the nucleus. The protein resides in the chromosome. The protein localises to the centromere. It localises to the kinetochore. In complex with KIF18B, constitutes the major microtubule plus-end depolymerizing activity in mitotic cells. Regulates the turnover of microtubules at the kinetochore and functions in chromosome segregation during mitosis. Plays a role in chromosome congression and is required for the lateral to end-on conversion of the chromosome-microtubule attachment. In Homo sapiens (Human), this protein is Kinesin-like protein KIF2C (KIF2C).